The sequence spans 378 residues: Diacetylchitobiose uptake system ATP-binding protein MsiK (378 aa).

Residues 4–236 form the ABC transporter domain; that stretch reads VTFDKATRVY…PANLFVAGFI (233 aa). An ATP-binding site is contributed by 38–45; sequence GPSGCGKS.

The protein belongs to the ABC transporter superfamily. As to quaternary structure, the DasABC-MsiK complex is composed of two ATP-binding proteins (MsiK), two transmembrane proteins (DasB and DasC) and a solute-binding protein (DasA). The NgcEFG-MsiK complex is composed of two ATP-binding proteins (MsiK), two transmembrane proteins (NgcF and NgcG) and a solute-binding protein (NgcE).

Its subcellular location is the cell membrane. Part of the ABC transporter complexes DasABC-MsiK and NgcEFG-MsiK involved in N,N'-diacetylchitobiose ((GlcNAc)2) uptake. Responsible for energy coupling to the transport system. This chain is Diacetylchitobiose uptake system ATP-binding protein MsiK, found in Streptomyces coelicolor (strain ATCC BAA-471 / A3(2) / M145).